A 520-amino-acid chain; its full sequence is Putative thymidine phosphorylase 1 (520 aa).

It belongs to the thymidine/pyrimidine-nucleoside phosphorylase family. Type 2 subfamily.

The catalysed reaction is thymidine + phosphate = 2-deoxy-alpha-D-ribose 1-phosphate + thymine. The polypeptide is Putative thymidine phosphorylase 1 (Cupriavidus necator (strain ATCC 17699 / DSM 428 / KCTC 22496 / NCIMB 10442 / H16 / Stanier 337) (Ralstonia eutropha)).